The sequence spans 554 residues: Glutamine--tRNA ligase (554 aa).

The 'HIGH' region motif lies at 34–44 (PEPNGYLHIGH). ATP contacts are provided by residues 35-37 (EPN) and 41-47 (HIGHAKS). Residues Asp67 and Tyr212 each contribute to the L-glutamine site. Residues Thr231, 261–262 (RL), and 269–271 (MSK) contribute to the ATP site. The 'KMSKS' region motif lies at 268–272 (VMSKR). An interaction with tRNA region spans residues 317–324 (TKQDNTIE).

This sequence belongs to the class-I aminoacyl-tRNA synthetase family. As to quaternary structure, monomer.

It localises to the cytoplasm. It catalyses the reaction tRNA(Gln) + L-glutamine + ATP = L-glutaminyl-tRNA(Gln) + AMP + diphosphate. This chain is Glutamine--tRNA ligase, found in Shigella boydii serotype 18 (strain CDC 3083-94 / BS512).